Here is a 194-residue protein sequence, read N- to C-terminus: Outer surface 22 kDa lipoprotein (194 aa).

A signal peptide spans 1–21; sequence MYKNGFFKNYLSLFLIFLVIA. Residue cysteine 22 is the site of N-palmitoyl cysteine attachment. Cysteine 22 carries the S-diacylglycerol cysteine lipid modification.

It localises to the cell outer membrane. The chain is Outer surface 22 kDa lipoprotein (p22) from Borreliella burgdorferi (strain ZS7) (Borrelia burgdorferi).